Here is a 2924-residue protein sequence, read N- to C-terminus: Zinc finger ZZ-type and EF-hand domain-containing protein 1 (2924 aa).

Positions 1–41 are disordered; that stretch reads MGNAPSNSSEDEAAAAGGEGWSPHQDWAADSGTTPGPGPAA. Residue glycine 2 is the site of N-myristoyl glycine attachment. Positions 28 to 41 are enriched in low complexity; sequence AADSGTTPGPGPAA. Residues 111–146 enclose the EF-hand domain; sequence CSGEQFEEAFAQFDAEGDGTVDAENMLEALKNSSGA. The region spanning 226–405 is the DOC domain; that stretch reads LVQKEKESPG…AIWYWSLLTS (180 aa). Serine 240 bears the Phosphoserine mark. The segment covering 1452–1470 has biased composition (basic and acidic residues); sequence HLQPLDRRQRTSSVVEEHF. Residues 1452-1527 form a disordered region; it reads HLQPLDRRQR…STPTRRPPFT (76 aa). Residues 1472–1485 show a composition bias toward low complexity; sequence GSASPTEAATPAAG. 3 positions are modified to phosphoserine: serine 1475, serine 1488, and serine 1509. Position 1510 is a phosphothreonine (threonine 1510). Residues 1514–1523 show a composition bias toward pro residues; sequence PSPPSTPTRR. Serine 1515 is modified (phosphoserine). A phosphothreonine mark is found at threonine 1519 and threonine 1521. A phosphoserine mark is found at serine 1535 and serine 1538. ZZ-type zinc fingers lie at residues 1776 to 1831 and 1825 to 1880; these read NVDI…FTCD and NMEF…MVTI. Positions 1781, 1784, 1795, 1798, 1804, 1807, 1817, 1821, 1830, 1833, 1844, 1847, 1853, 1856, 1866, and 1870 each coordinate Zn(2+). A disordered region spans residues 2388 to 2418; the sequence is DLELDERGDQEEELDRPVSSPGEAEQKKLDP. A Phosphoserine modification is found at serine 2407. Lysine 2630 bears the N6-acetyllysine mark.

As to quaternary structure, interacts with KLF6 and KLF9. Interacts via (ZZ-type 2 zinc finger) with histone H3 trimethylated at 'Lys-4' (H3K4me3) and histone H3 acetylated at 'Lys-4' (H3K4ac).

Histone H3 reader which may act as a transcriptional coactivator for KLF6 and KLF9 transcription factors. This chain is Zinc finger ZZ-type and EF-hand domain-containing protein 1 (Zzef1), found in Mus musculus (Mouse).